Consider the following 136-residue polypeptide: Small ribosomal subunit protein uS9 (136 aa).

It belongs to the universal ribosomal protein uS9 family.

In Borrelia duttonii (strain Ly), this protein is Small ribosomal subunit protein uS9.